The chain runs to 511 residues: MASDSSFPGASSNVAEYSVSEISGALKRTVEDTFGHVRVRGEISGYRGPHSSGHAYFALKDDRARLEAVIWRGSMSRLRFRPEEGMEVIATGKLTTYPGSSKYQIVIEQMEPAGAGALMALLEERKQRLAAEGLFDPALKQLLPFMPRVIGVVTSPTGAVIRDIIHRISDRYPLRVIVWPVRVQGDTCGPEVATAVNGFNTLPDDGPIPRPDVLIVARGGGSLEDLWGFNDEIVVRAVAASHIPVISAVGHETDWTLIDLAADMRAPTPTGAAEMAVPVKADLQASLASQSARLSSAMSRFFDQKRQAHRAAARAMPSADQLLALPRRRFDEAASRLTRALFVNTQKKRVHFDGHARQLSPRLLQRRLVELERGVTMLGQRLPRALEAFLRERRTAFTHRANRLSPEPILRRTRLTGSTLEQLDRRRDQAVRLLIERVKRRSQELDRLMRTLSYESVLERGFAVVFDAQGKPVKQAAAVSPGDALSIRFRDGDVGVVARAGLTIPDPTKGQ.

Belongs to the XseA family. As to quaternary structure, heterooligomer composed of large and small subunits.

The protein localises to the cytoplasm. It catalyses the reaction Exonucleolytic cleavage in either 5'- to 3'- or 3'- to 5'-direction to yield nucleoside 5'-phosphates.. Functionally, bidirectionally degrades single-stranded DNA into large acid-insoluble oligonucleotides, which are then degraded further into small acid-soluble oligonucleotides. This chain is Exodeoxyribonuclease 7 large subunit, found in Brucella melitensis biotype 2 (strain ATCC 23457).